A 521-amino-acid chain; its full sequence is Probable tRNA (uracil-O(2)-)-methyltransferase (521 aa).

This sequence belongs to the TRM44 family.

The protein resides in the cytoplasm. It catalyses the reaction uridine(44) in tRNA(Ser) + S-adenosyl-L-methionine = 2'-O-methyluridine(44) in tRNA(Ser) + S-adenosyl-L-homocysteine + H(+). Probable adenosyl-L-methionine (AdoMet)-dependent tRNA (uracil-O(2)-)-methyltransferase. The polypeptide is Probable tRNA (uracil-O(2)-)-methyltransferase (trmt44) (Drosophila melanogaster (Fruit fly)).